Consider the following 159-residue polypeptide: MPELKIKTEKVEKQLTKEPLVLKTPKEKIDNSGKFYATGKRKNAIARVWLKVGKGKIVVNKKTIAQYFPSETYVKTILQPFVLTKTIDQYDVICTVRGGGISGQKGAILHGISKALDKSAPDFHVILRKGGLLTRDSRVVERKKYGQRKARKKTQFSKR.

The protein belongs to the universal ribosomal protein uS9 family.

The chain is Small ribosomal subunit protein uS9 from Rickettsia massiliae (strain Mtu5).